The primary structure comprises 147 residues: uncharacterized protein (147 aa).

This is an uncharacterized protein from Bacillus subtilis (strain 168).